Reading from the N-terminus, the 240-residue chain is Dihydromonapterin reductase (240 aa).

Y152 (proton acceptor) is an active-site residue.

The protein belongs to the short-chain dehydrogenases/reductases (SDR) family. FolM subfamily.

It catalyses the reaction (6S)-5,6,7,8-tetrahydrofolate + NADP(+) = 7,8-dihydrofolate + NADPH + H(+). The catalysed reaction is 7,8-dihydromonapterin + NADPH + H(+) = 5,6,7,8-tetrahydromonapterin + NADP(+). In terms of biological role, catalyzes the reduction of dihydromonapterin to tetrahydromonapterin. Also has lower activity with dihydrofolate. The chain is Dihydromonapterin reductase (folM) from Shigella flexneri serotype 5b (strain 8401).